The following is a 139-amino-acid chain: Putative nickel-responsive regulator (139 aa).

Ni(2+)-binding residues include His-79, His-90, His-92, and Cys-98.

Belongs to the transcriptional regulatory CopG/NikR family. It depends on Ni(2+) as a cofactor.

Its function is as follows. Transcriptional regulator. The chain is Putative nickel-responsive regulator from Pelobacter propionicus (strain DSM 2379 / NBRC 103807 / OttBd1).